A 302-amino-acid polypeptide reads, in one-letter code: Sodium/potassium-transporting ATPase subunit beta-233 (302 aa).

Residues 1–30 (MSGNKDSDGGWKTFIWNSEKKELLGRTGCS) lie on the Cytoplasmic side of the membrane. Residues 31 to 51 (WFKILLFYVIFYGCLAAVFVG) form a helical; Signal-anchor for type II membrane protein membrane-spanning segment. Residues 52 to 302 (TIQALLLTLS…FDIKITVNDS (251 aa)) are Extracellular-facing. 2 disulfide bridges follow: C125–C148 and C158–C174. 2 N-linked (GlcNAc...) asparagine glycosylation sites follow: N193 and N263. Residues C213 and C274 are joined by a disulfide bond.

It belongs to the X(+)/potassium ATPases subunit beta family. The sodium/potassium-transporting ATPase is composed of a catalytic alpha subunit, an auxiliary non-catalytic beta subunit and an additional regulatory subunit. Post-translationally, glycosylated. Expressed mainly in epithelial tissues.

Its subcellular location is the cell membrane. Functionally, this is the non-catalytic component of the active enzyme, which catalyzes the hydrolysis of ATP coupled with the exchange of Na(+) and K(+) ions across the plasma membrane. The beta subunit regulates, through assembly of alpha/beta heterodimers, the number of sodium pumps transported to the plasma membrane. This is Sodium/potassium-transporting ATPase subunit beta-233 from Anguilla anguilla (European freshwater eel).